The sequence spans 496 residues: Cytochrome P450 71D180 (496 aa).

A helical; Signal-anchor for type II membrane protein membrane pass occupies residues 1–21 (MDISISWVVIIVFVLSYLILM). Position 435 (Cys435) interacts with heme.

The protein belongs to the cytochrome P450 family. Heme serves as cofactor. As to expression, mostly expressed in flowers and, to a lower extent, in leaves, especially in glandular trichomes.

It localises to the membrane. It catalyses the reaction (4R)-limonene + reduced [NADPH--hemoprotein reductase] + O2 = (1R,5S)-carveol + oxidized [NADPH--hemoprotein reductase] + H2O + H(+). It carries out the reaction (4S)-limonene + reduced [NADPH--hemoprotein reductase] + O2 = (1S,5R)-carveol + oxidized [NADPH--hemoprotein reductase] + H2O + H(+). The enzyme catalyses gamma-terpinene + 2 reduced [NADPH--hemoprotein reductase] + 2 O2 = carvacrol + 2 oxidized [NADPH--hemoprotein reductase] + 3 H2O + 2 H(+). The protein operates within secondary metabolite biosynthesis; terpenoid biosynthesis. Its function is as follows. Involved in the biosynthesis of phenolic monoterpenes natural products thymol and carvacrol which have a broad range of biological activities acting as antimicrobial compounds, insecticides, antioxidants and pharmaceutical agents. Catalyzes the C2-hydroxylation of gamma-terpinene to produce carvacrol. Mediates also the C6-hydroxylation of (4S)-limonene and (4R)-limonene to form carveol. The polypeptide is Cytochrome P450 71D180 (Thymus vulgaris (Thyme)).